The chain runs to 328 residues: Formyltetrahydrofolate deformylase 2, mitochondrial (328 aa).

A mitochondrion-targeting transit peptide spans 1-12 (MIRRVSTTSCLS). The ACT domain occupies 46 to 129 (FHVFHCPDVV…SVVRVPSLDP (84 aa)). Asp272 is an active-site residue.

It belongs to the PurU family. As to expression, expressed in leaves, cotyledons, roots, seeds and flowers.

Its subcellular location is the mitochondrion. It carries out the reaction (6R)-10-formyltetrahydrofolate + H2O = (6S)-5,6,7,8-tetrahydrofolate + formate + H(+). Deformylase involved in photorespiration. Prevents excessive accumulation of 5-formyl tetrahydrofolate (THF), a potent inhibitor of the Gly decarboxylase/Ser hydroxymethyltransferase complex. This chain is Formyltetrahydrofolate deformylase 2, mitochondrial (PURU2), found in Arabidopsis thaliana (Mouse-ear cress).